We begin with the raw amino-acid sequence, 174 residues long: Peptide deformylase (174 aa).

The Fe cation site is built by Cys-96 and His-138. Glu-139 is a catalytic residue. His-142 is a Fe cation binding site.

The protein belongs to the polypeptide deformylase family. The cofactor is Fe(2+).

It catalyses the reaction N-terminal N-formyl-L-methionyl-[peptide] + H2O = N-terminal L-methionyl-[peptide] + formate. Removes the formyl group from the N-terminal Met of newly synthesized proteins. Requires at least a dipeptide for an efficient rate of reaction. N-terminal L-methionine is a prerequisite for activity but the enzyme has broad specificity at other positions. The chain is Peptide deformylase from Helicobacter pylori (strain P12).